The chain runs to 152 residues: UPF0266 membrane protein YobD (152 aa).

Helical transmembrane passes span 6–26 (LVLI…QFIM), 45–65 (IDSV…VTNH), and 67–87 (ALIT…IFWI).

This sequence belongs to the UPF0266 family.

Its subcellular location is the cell inner membrane. This chain is UPF0266 membrane protein YobD, found in Escherichia coli O127:H6 (strain E2348/69 / EPEC).